A 174-amino-acid chain; its full sequence is Large ribosomal subunit protein uL10 (174 aa).

This sequence belongs to the universal ribosomal protein uL10 family. As to quaternary structure, part of the ribosomal stalk of the 50S ribosomal subunit. The N-terminus interacts with L11 and the large rRNA to form the base of the stalk. The C-terminus forms an elongated spine to which L12 dimers bind in a sequential fashion forming a multimeric L10(L12)X complex.

Functionally, forms part of the ribosomal stalk, playing a central role in the interaction of the ribosome with GTP-bound translation factors. This Synechococcus sp. (strain RCC307) protein is Large ribosomal subunit protein uL10.